We begin with the raw amino-acid sequence, 99 residues long: Translation initiation factor 1A (99 aa).

The region spanning 11–84 is the S1-like domain; sequence RRVRTPRRGE…EKADIVWRYT (74 aa).

It belongs to the eIF-1A family.

Functionally, seems to be required for maximal rate of protein biosynthesis. Enhances ribosome dissociation into subunits and stabilizes the binding of the initiator Met-tRNA(I) to 40 S ribosomal subunits. The chain is Translation initiation factor 1A (eIF1A) from Methanothermobacter thermautotrophicus (strain ATCC 29096 / DSM 1053 / JCM 10044 / NBRC 100330 / Delta H) (Methanobacterium thermoautotrophicum).